Reading from the N-terminus, the 266-residue chain is Isopentenyl phosphate kinase (266 aa).

Residue lysine 5–serine 9 coordinates ATP. Alanine 47 provides a ligand contact to substrate. Glycine 48 contacts ATP. Substrate is bound by residues histidine 52 and glycine 157. Residues aspartate 178, tyrosine 183–lysine 188, glycine 219, and lysine 223 each bind ATP.

The protein belongs to the isopentenyl phosphate kinase family. As to quaternary structure, homodimer.

The catalysed reaction is isopentenyl phosphate + ATP = isopentenyl diphosphate + ADP. Its function is as follows. Catalyzes the formation of isopentenyl diphosphate (IPP), the building block of all isoprenoids. Has lower activity with dimethylallyl phosphate (DMAP) and isopentenyl thiolophosphate (ISP). Has low activity with 1-butyl phosphate (BP) and 3-buten-1-yl phosphate (BEP). Has no significant activity with geranyl phosphate (in vitro). In Methanothermobacter thermautotrophicus (strain ATCC 29096 / DSM 1053 / JCM 10044 / NBRC 100330 / Delta H) (Methanobacterium thermoautotrophicum), this protein is Isopentenyl phosphate kinase.